A 560-amino-acid polypeptide reads, in one-letter code: NAD(P)H-quinone oxidoreductase chain 4-3 (560 aa).

Helical transmembrane passes span 5–25 (FPWLTAIILLPLVASAFIPLL), 35–55 (WYALGVGIADFVLMCYTFWHH), 86–106 (ISMPLVLLAGFVTTLSMLAAW), 114–134 (LFYFLMLVLYSAQIGVFVAQD), 135–155 (LLLFFIMWELELVPVYLLVSI), 168–188 (FLLYTAAASIFILIAGLAMAL), 208–228 (ALELLLYAGLLIAFGVKLAIF), 242–262 (SAPVSMILAGVLLKMGGYGLI), 273–293 (HIYFAPVLATLGVINIIYGGL), 310–330 (VSHMGFVLLGIASFTDVGVSG), 331–351 (AMLQMLSHGLIAAVLFFLAGV), 374–394 (VFALFTAGTMASLALPGMSGF), 417–437 (VMVFLAAVGVILTPIYLLSML), and 488–508 (VFIAVSFLVLIIGVGVYPKIA).

This sequence belongs to the complex I subunit 4 family.

It localises to the cellular thylakoid membrane. The catalysed reaction is a plastoquinone + NADH + (n+1) H(+)(in) = a plastoquinol + NAD(+) + n H(+)(out). The enzyme catalyses a plastoquinone + NADPH + (n+1) H(+)(in) = a plastoquinol + NADP(+) + n H(+)(out). Its function is as follows. NDH-1 shuttles electrons from NAD(P)H, via FMN and iron-sulfur (Fe-S) centers, to quinones in the respiratory chain. The immediate electron acceptor for the enzyme in this species is believed to be plastoquinone. Couples the redox reaction to proton translocation (for every two electrons transferred, four hydrogen ions are translocated across the cytoplasmic membrane), and thus conserves the redox energy in a proton gradient. In Nostoc sp. (strain PCC 7120 / SAG 25.82 / UTEX 2576), this protein is NAD(P)H-quinone oxidoreductase chain 4-3 (ndhD3).